Here is a 191-residue protein sequence, read N- to C-terminus: Ribosome maturation factor RimM (191 aa).

The PRC barrel domain occupies 99 to 172 (TDEFYQIDLI…FLVVDPVAAG (74 aa)).

The protein belongs to the RimM family. As to quaternary structure, binds ribosomal protein uS19.

Its subcellular location is the cytoplasm. In terms of biological role, an accessory protein needed during the final step in the assembly of 30S ribosomal subunit, possibly for assembly of the head region. Essential for efficient processing of 16S rRNA. May be needed both before and after RbfA during the maturation of 16S rRNA. It has affinity for free ribosomal 30S subunits but not for 70S ribosomes. In Bartonella bacilliformis (strain ATCC 35685 / KC583 / Herrer 020/F12,63), this protein is Ribosome maturation factor RimM.